Here is a 229-residue protein sequence, read N- to C-terminus: Orotate phosphoribosyltransferase (229 aa).

5-phospho-alpha-D-ribose 1-diphosphate contacts are provided by residues R107, K108, K111, H113, and E133 to S141. T137 provides a ligand contact to orotate.

This sequence belongs to the purine/pyrimidine phosphoribosyltransferase family. PyrE subfamily. As to quaternary structure, homodimer. Requires Mg(2+) as cofactor.

The enzyme catalyses orotidine 5'-phosphate + diphosphate = orotate + 5-phospho-alpha-D-ribose 1-diphosphate. The protein operates within pyrimidine metabolism; UMP biosynthesis via de novo pathway; UMP from orotate: step 1/2. Functionally, catalyzes the transfer of a ribosyl phosphate group from 5-phosphoribose 1-diphosphate to orotate, leading to the formation of orotidine monophosphate (OMP). This Rhizobium etli (strain ATCC 51251 / DSM 11541 / JCM 21823 / NBRC 15573 / CFN 42) protein is Orotate phosphoribosyltransferase.